Reading from the N-terminus, the 148-residue chain is UPF0260 protein PC1_1943 (148 aa).

Belongs to the UPF0260 family.

The protein is UPF0260 protein PC1_1943 of Pectobacterium carotovorum subsp. carotovorum (strain PC1).